The chain runs to 439 residues: Aspartate--tRNA(Asp/Asn) ligase (439 aa).

Glutamate 177 contacts L-aspartate. Residues 199 to 202 are aspartate; that stretch reads QLYK. Residue arginine 221 participates in L-aspartate binding. ATP contacts are provided by residues 221 to 223, 229 to 231, and glutamate 362; these read RAE and RHL. 2 residues coordinate Mg(2+): glutamate 362 and serine 365. L-aspartate-binding residues include serine 365 and arginine 369. 410–413 contacts ATP; the sequence is GADR.

The protein belongs to the class-II aminoacyl-tRNA synthetase family. Type 2 subfamily. As to quaternary structure, homodimer. Mg(2+) is required as a cofactor.

It is found in the cytoplasm. It carries out the reaction tRNA(Asx) + L-aspartate + ATP = L-aspartyl-tRNA(Asx) + AMP + diphosphate. Aspartyl-tRNA synthetase with relaxed tRNA specificity since it is able to aspartylate not only its cognate tRNA(Asp) but also tRNA(Asn). Reaction proceeds in two steps: L-aspartate is first activated by ATP to form Asp-AMP and then transferred to the acceptor end of tRNA(Asp/Asn). The sequence is that of Aspartate--tRNA(Asp/Asn) ligase from Methanosphaera stadtmanae (strain ATCC 43021 / DSM 3091 / JCM 11832 / MCB-3).